A 243-amino-acid chain; its full sequence is GrpE protein homolog, mitochondrial (243 aa).

A disordered region spans residues Lys-56–Gln-79.

This sequence belongs to the GrpE family. As to quaternary structure, component of the PAM complex, at least composed of mtHsp70, MGE1, TIM44, PAM16, PAM17 and PAM18.

The protein localises to the mitochondrion matrix. Essential component of the PAM complex, a complex required for the translocation of transit peptide-containing proteins from the inner membrane into the mitochondrial matrix in an ATP-dependent manner. Seems to control the nucleotide-dependent binding of SSC1 to substrate proteins. The polypeptide is GrpE protein homolog, mitochondrial (mge1) (Kluyveromyces lactis (strain ATCC 8585 / CBS 2359 / DSM 70799 / NBRC 1267 / NRRL Y-1140 / WM37) (Yeast)).